Consider the following 150-residue polypeptide: Small ribosomal subunit protein uS11x (150 aa).

The protein belongs to the universal ribosomal protein uS11 family.

It is found in the cytoplasm. This is Small ribosomal subunit protein uS11x (RPS14C) from Arabidopsis thaliana (Mouse-ear cress).